The following is a 347-amino-acid chain: Dual specificity mitogen-activated protein kinase kinase 3 (347 aa).

The residue at position 1 (methionine 1) is an N-acetylmethionine. The span at 1-11 (MESPAASPPAS) shows a compositional bias: pro residues. Residues 1–45 (MESPAASPPASLPQTKGKSKRKKDLRISCVSKPPVSNPTPPRNLD) form a disordered region. Serine 3 carries the post-translational modification Phosphoserine. A Protein kinase domain is found at 64 to 325 (LVTISELGRG…YLELMEHPFF (262 aa)). ATP is bound by residues 70-78 (LGRGAYGVV) and lysine 93. The active-site Proton acceptor is the aspartate 190. Serine 218 carries the phosphoserine modification. Threonine 222 is subject to Phosphothreonine.

It belongs to the protein kinase superfamily. STE Ser/Thr protein kinase family. MAP kinase kinase subfamily. In terms of assembly, component of a signaling complex containing at least AKAP13, PKN1, MAPK14, ZAK and MAP2K3. Within this complex, AKAP13 interacts directly with PKN1, which in turn recruits MAPK14, MAP2K3 and ZAK. Binds to DYRK1B/MIRK and increases its kinase activity. Part of a complex with MAP3K3, RAC1 and CCM2. Interacts with ARRB1. Post-translationally, autophosphorylated. Phosphorylation on Ser-218 and Thr-222 by MAP kinase kinase kinases positively regulates the kinase activity. Phosphorylated by TAOK2.

It carries out the reaction L-seryl-[protein] + ATP = O-phospho-L-seryl-[protein] + ADP + H(+). The enzyme catalyses L-threonyl-[protein] + ATP = O-phospho-L-threonyl-[protein] + ADP + H(+). It catalyses the reaction L-tyrosyl-[protein] + ATP = O-phospho-L-tyrosyl-[protein] + ADP + H(+). Activated by dual phosphorylation on Ser-218 and Thr-222. Functionally, dual specificity kinase. Is activated by cytokines and environmental stress in vivo. Catalyzes the concomitant phosphorylation of a threonine and a tyrosine residue in the MAP kinase p38. Part of a signaling cascade that begins with the activation of the adrenergic receptor ADRA1B and leads to the activation of MAPK14. In Mus musculus (Mouse), this protein is Dual specificity mitogen-activated protein kinase kinase 3 (Map2k3).